We begin with the raw amino-acid sequence, 318 residues long: Very-long-chain 3-oxoacyl-CoA reductase-A (318 aa).

The chain crosses the membrane as a helical span at residues 15–35; sequence FWYLGVLAAAWWGLRAACCLL. An NADP(+)-binding site is contributed by 54 to 83; that stretch reads GKWAVVTGATDGIGKAYAEELARRGMSIVL. 2 consecutive transmembrane segments (helical) span residues 187–207 and 281–301; these read GVIL…LTVY and AIMG…SMGM. Position 194 (Ser-194) interacts with substrate. The active-site Proton acceptor is the Tyr-207.

Belongs to the short-chain dehydrogenases/reductases (SDR) family. 17-beta-HSD 3 subfamily.

It localises to the endoplasmic reticulum membrane. The catalysed reaction is a very-long-chain (3R)-3-hydroxyacyl-CoA + NADP(+) = a very-long-chain 3-oxoacyl-CoA + NADPH + H(+). The enzyme catalyses 17beta-estradiol + NAD(+) = estrone + NADH + H(+). It catalyses the reaction 17beta-estradiol + NADP(+) = estrone + NADPH + H(+). It participates in lipid metabolism; fatty acid biosynthesis. It functions in the pathway steroid biosynthesis; estrogen biosynthesis. In terms of biological role, catalyzes the second of the four reactions of the long-chain fatty acids elongation cycle. This endoplasmic reticulum-bound enzymatic process, allows the addition of two carbons to the chain of long- and very long-chain fatty acids/VLCFAs per cycle. This enzyme has a 3-ketoacyl-CoA reductase activity, reducing 3-ketoacyl-CoA to 3-hydroxyacyl-CoA, within each cycle of fatty acid elongation. Thereby, it may participate in the production of VLCFAs of different chain lengths that are involved in multiple biological processes as precursors of membrane lipids and lipid mediators. May also catalyze the transformation of estrone (E1) into estradiol (E2) and play a role in estrogen formation. The chain is Very-long-chain 3-oxoacyl-CoA reductase-A (hsd17b12-a) from Xenopus laevis (African clawed frog).